The sequence spans 208 residues: Imidazoleglycerol-phosphate dehydratase (208 aa).

This sequence belongs to the imidazoleglycerol-phosphate dehydratase family.

Its subcellular location is the cytoplasm. It carries out the reaction D-erythro-1-(imidazol-4-yl)glycerol 3-phosphate = 3-(imidazol-4-yl)-2-oxopropyl phosphate + H2O. Its pathway is amino-acid biosynthesis; L-histidine biosynthesis; L-histidine from 5-phospho-alpha-D-ribose 1-diphosphate: step 6/9. This Symbiobacterium thermophilum (strain DSM 24528 / JCM 14929 / IAM 14863 / T) protein is Imidazoleglycerol-phosphate dehydratase.